The following is a 555-amino-acid chain: Cilia- and flagella-associated protein 184 (555 aa).

Over residues 1–12 (MDVSSEHTKDPG) the composition is skewed to basic and acidic residues. A disordered region spans residues 1–202 (MDVSSEHTKD…KSQEEGKRLY (202 aa)). Composition is skewed to acidic residues over residues 41 to 54 (GELE…EEEQ) and 95 to 105 (PEPEEPAEVGA). Residues 106–117 (EEPAQPEPGAGP) show a composition bias toward low complexity. The span at 118 to 131 (EELEAEAGAEELEQ) shows a compositional bias: acidic residues. Basic and acidic residues predominate over residues 174–202 (ETQRDGAESKERDGEGRPAKSQEEGKRLY). 2 coiled-coil regions span residues 305–441 (YHQE…NSVQ) and 505–531 (DSLL…LKRH).

The protein belongs to the CFAP184 family. Forms a complex with CFAP263; the interaction is required for functional activity in cilia.

The protein resides in the cell projection. The protein localises to the cilium. Its subcellular location is the cytoplasm. It is found in the cytoskeleton. It localises to the microtubule organizing center. The protein resides in the centrosome. In complex with CFAP263, acts as a regulator of ciliary beating that connects radial spoke 3 (RS3) to the inner dynein arm (IDA) and the nexin-dynein regulatory complex (N-DRC). The complex is positioned parallel to N-DRC and forms a connection between the arch at the base of RS3, the IDA tail and N-DRC. The protein is Cilia- and flagella-associated protein 184 of Homo sapiens (Human).